Here is a 257-residue protein sequence, read N- to C-terminus: Snake venom serine protease BITS01A (257 aa).

Positions 1-18 (MVLIRVIANLLILQVSYA) are cleaved as a signal peptide. Residues 19–24 (QKSSEL) constitute a propeptide that is removed on maturation. In terms of domain architecture, Peptidase S1 spans 25–248 (VVGGDECDIN…YLPWIQSIIA (224 aa)). 6 disulfide bridges follow: C31-C162, C49-C65, C97-C255, C141-C209, C173-C188, and C199-C224. H64 serves as the catalytic Charge relay system. N101 carries an N-linked (GlcNAc...) asparagine glycan. D109 (charge relay system) is an active-site residue. Residues N121, N153, and N169 are each glycosylated (N-linked (GlcNAc...) asparagine). Residue S203 is the Charge relay system of the active site. N210 and N250 each carry an N-linked (GlcNAc...) asparagine glycan.

Belongs to the peptidase S1 family. Snake venom subfamily. Monomer. As to expression, expressed by the venom gland.

It localises to the secreted. Snake venom serine protease that may act in the hemostasis system of the prey. The sequence is that of Snake venom serine protease BITS01A from Bothrops insularis (Golden lancehead).